We begin with the raw amino-acid sequence, 318 residues long: MDFKDYYKILGVEPTADDKAIKAAYRKLARKYHPDVSKERDAEDKFKEANEAYEVLGDAQKRAEFDEIRKYGGQHGRPFQAPPGWENRGGGGGFEGGDFSDFFSSIFGGRGGGNPFGGARQQQRSAGRRGQDVELELAVFLEETLSKESKQISFQVPQTNAMGQRTGFTTKTLNVKIPAGVTDGERIRLKGQGAPGSGGGANGDLFLTLRMAPHPLFDVEGHDLIITVPLAPWEAALGAKVAVPTLEGKINLTIRPDSQSGQRLRVPGKGLANKQGERGNLYAQLKVVMPTTSDESTRELWAKLSEKAAFNPRAQWSK.

Residues 5–69 form the J domain; the sequence is DYYKILGVEP…QKRAEFDEIR (65 aa). The tract at residues 111–130 is disordered; the sequence is GGGNPFGGARQQQRSAGRRG.

It localises to the cytoplasm. The protein resides in the nucleoid. Functionally, DNA-binding protein that preferentially recognizes a curved DNA sequence. It is probably a functional analog of DnaJ; displays overlapping activities with DnaJ, but functions under different conditions, probably acting as a molecular chaperone in an adaptive response to environmental stresses other than heat shock. Lacks autonomous chaperone activity; binds native substrates and targets them for recognition by DnaK. Its activity is inhibited by the binding of CbpM. This is Curved DNA-binding protein from Pseudomonas putida (strain GB-1).